The following is a 555-amino-acid chain: Urocanate hydratase (555 aa).

Residues 51–52 (GG), Gln-129, 175–177 (GMG), Glu-195, Arg-200, 241–242 (NA), 262–266 (QTSAH), 272–273 (YL), and Tyr-321 each bind NAD(+). Residue Cys-409 is part of the active site. Gly-491 contributes to the NAD(+) binding site.

This sequence belongs to the urocanase family. NAD(+) serves as cofactor.

It localises to the cytoplasm. The catalysed reaction is 4-imidazolone-5-propanoate = trans-urocanate + H2O. Its pathway is amino-acid degradation; L-histidine degradation into L-glutamate; N-formimidoyl-L-glutamate from L-histidine: step 2/3. Its function is as follows. Catalyzes the conversion of urocanate to 4-imidazolone-5-propionate. In Rhizorhabdus wittichii (strain DSM 6014 / CCUG 31198 / JCM 15750 / NBRC 105917 / EY 4224 / RW1) (Sphingomonas wittichii), this protein is Urocanate hydratase.